Consider the following 893-residue polypeptide: UPF0182 protein CLK_3152 (893 aa).

Transmembrane regions (helical) follow at residues 9–29, 49–69, 94–114, 154–174, 202–222, 246–266, and 273–293; these read IPLFIIILFIAFFNKIINFII, AIIILMIPIFIIFFISIWMYY, LFFIFNFIVSIFLAYIFSSSY, VIISLLLFLVITTFIAYFILE, LAIVSGLIILFISFGHLIKIW, FYKIIVVITLISSIVTLLSIV, and VSICIGITIFLIVSQNIASFL.

This sequence belongs to the UPF0182 family.

It is found in the cell membrane. This chain is UPF0182 protein CLK_3152, found in Clostridium botulinum (strain Loch Maree / Type A3).